Reading from the N-terminus, the 45-residue chain is Amphipathic peptide Hj0164 (45 aa).

The signal sequence occupies residues 1–23; it reads MKSQAFFLLFLVVLLLATTQSEA. Phenylalanine 33 is subject to Phenylalanine amide. The propeptide occupies 37–45; that stretch reads SLRDVDTMK.

This sequence belongs to the non-disulfide-bridged peptide (NDBP) superfamily. Short antimicrobial peptide (group 4) family. As to expression, expressed by the venom gland.

Its subcellular location is the secreted. It localises to the target cell membrane. Its function is as follows. Amphipathic peptide that shows antibacterial activities. This Hottentotta judaicus (Black scorpion) protein is Amphipathic peptide Hj0164.